The sequence spans 472 residues: Siroheme synthase 1 (472 aa).

Residues 1-203 (MDYLPLFADL…GQLTEAENEL (203 aa)) are precorrin-2 dehydrogenase /sirohydrochlorin ferrochelatase. NAD(+)-binding positions include 22–23 (EV) and 43–44 (QT). Phosphoserine is present on Ser-128. Positions 215-472 (GEVALVGAGP…AISPSVVNLA (258 aa)) are uroporphyrinogen-III C-methyltransferase. S-adenosyl-L-methionine is bound at residue Pro-224. The active-site Proton acceptor is the Asp-247. The Proton donor role is filled by Lys-269. S-adenosyl-L-methionine is bound by residues 300–302 (GGD), Ile-305, 330–331 (TA), Met-382, and Gly-411.

It in the N-terminal section; belongs to the precorrin-2 dehydrogenase / sirohydrochlorin ferrochelatase family. This sequence in the C-terminal section; belongs to the precorrin methyltransferase family.

It carries out the reaction uroporphyrinogen III + 2 S-adenosyl-L-methionine = precorrin-2 + 2 S-adenosyl-L-homocysteine + H(+). The enzyme catalyses precorrin-2 + NAD(+) = sirohydrochlorin + NADH + 2 H(+). It catalyses the reaction siroheme + 2 H(+) = sirohydrochlorin + Fe(2+). It functions in the pathway cofactor biosynthesis; adenosylcobalamin biosynthesis; precorrin-2 from uroporphyrinogen III: step 1/1. The protein operates within cofactor biosynthesis; adenosylcobalamin biosynthesis; sirohydrochlorin from precorrin-2: step 1/1. Its pathway is porphyrin-containing compound metabolism; siroheme biosynthesis; precorrin-2 from uroporphyrinogen III: step 1/1. It participates in porphyrin-containing compound metabolism; siroheme biosynthesis; siroheme from sirohydrochlorin: step 1/1. It functions in the pathway porphyrin-containing compound metabolism; siroheme biosynthesis; sirohydrochlorin from precorrin-2: step 1/1. In terms of biological role, multifunctional enzyme that catalyzes the SAM-dependent methylations of uroporphyrinogen III at position C-2 and C-7 to form precorrin-2 via precorrin-1. Then it catalyzes the NAD-dependent ring dehydrogenation of precorrin-2 to yield sirohydrochlorin. Finally, it catalyzes the ferrochelation of sirohydrochlorin to yield siroheme. The chain is Siroheme synthase 1 from Yersinia pestis bv. Antiqua (strain Nepal516).